Here is a 655-residue protein sequence, read N- to C-terminus: RalA-binding protein 1-A (655 aa).

The tract at residues 1 to 153 is disordered; it reads MTECFLPPAS…KKSKDLTAAD (153 aa). Basic and acidic residues predominate over residues 52 to 68; the sequence is DILHEPPDIVSEDEKDH. Residue 69 to 74 participates in ATP binding; that stretch reads GKKKGK. Basic residues-rich tracts occupy residues 69 to 79 and 102 to 118; these read GKKKGKFKKKE and KIKR…PSFS. Positions 102–119 are nuclear localization signal; sequence KIKRSKGIHVFKKPSFSK. The segment covering 119–150 has biased composition (basic and acidic residues); it reads KKKEKDFKIKEKPKEEKHKEDKHKEKKSKDLT. 2 repeat units span residues 133-137 and 138-142. The 2 X 5 AA tandem repeats of E-[D/E]-K-H-K stretch occupies residues 133-142; the sequence is EEKHKEDKHK. The mediates association with membranes and could form transmembrane domains stretch occupies residues 149–214; it reads LTAADVVKQW…PLVFRECIDF (66 aa). Positions 187-383 constitute a Rho-GAP domain; the sequence is IPLIEAAERT…PLRWSNMATM (197 aa). Residues 398 to 495 form a mediates interaction with RALA and RALB region; it reads RRQEFLLNCL…LTEQEELVAM (98 aa). Residue 413–420 participates in ATP binding; sequence AGVKDLSK. The tract at residues 494-510 is required to maintain nuclear localization; it reads AMEQYLRRQIATEKEEI. The mediates interaction with REPS1 and REPS2 stretch occupies residues 496-655; the sequence is EQYLRRQIAT…GKKLSSETLI (160 aa). Disordered regions lie at residues 520–548 and 600–655; these read IQSR…EEEL and LQEE…ETLI. A compositionally biased stretch (acidic residues) spans 532-548; that stretch reads EEYSSESESESEDEEEL. The segment covering 619–630 has biased composition (basic and acidic residues); sequence NLPETKAPKDQP.

In terms of assembly, interacts with the active, GTP-bound form of ralB and ralA.

Its subcellular location is the cell membrane. It is found in the cytoplasm. The protein resides in the cytosol. The protein localises to the cytoskeleton. It localises to the spindle pole. Its subcellular location is the nucleus. It is found in the mitochondrion. The protein resides in the cell projection. The protein localises to the lamellipodium. It catalyses the reaction an S-substituted glutathione(in) + ATP + H2O = an S-substituted glutathione(out) + ADP + phosphate + H(+). The enzyme catalyses ATP + H2O + xenobioticSide 1 = ADP + phosphate + xenobioticSide 2.. It carries out the reaction leukotriene C4(in) + ATP + H2O = leukotriene C4(out) + ADP + phosphate + H(+). In terms of biological role, multifunctional protein that functions as a downstream effector of ralA and ralB. As a GTPase-activating protein/GAP can inactivate CDC42 and RAC1 by stimulating their GTPase activity. As part of the Ral signaling pathway, may also regulate ligand-dependent EGF and insulin receptors-mediated endocytosis. During mitosis, may act as a scaffold protein in the phosphorylation of EPSIN/EPN1 by the mitotic kinase cyclin B-CDK1, preventing endocytosis during that phase of the cell cycle. During mitosis, also controls mitochondrial fission as an effector of ralA. Recruited to mitochondrion by ralA, acts as a scaffold to foster the mitotic kinase cyclin B-CDK1-mediated phosphorylation and activation of DNM1L. Acts on the cytoskeleton, to regulate pigment distribution and to regulate gastrulation. Its function is as follows. Could also function as a primary ATP-dependent active transporter for glutathione conjugates of electrophiles. May also actively catalyze the efflux of a wide range of substrates including xenobiotics like doxorubicin (DOX) contributing to cell multidrug resistance. In Xenopus laevis (African clawed frog), this protein is RalA-binding protein 1-A (ralbp1-a).